Reading from the N-terminus, the 526-residue chain is Glucose-6-phosphate isomerase (526 aa).

Glutamate 343 serves as the catalytic Proton donor. Residues histidine 374 and lysine 494 contribute to the active site.

It belongs to the GPI family.

The protein resides in the cytoplasm. It carries out the reaction alpha-D-glucose 6-phosphate = beta-D-fructose 6-phosphate. It functions in the pathway carbohydrate biosynthesis; gluconeogenesis. It participates in carbohydrate degradation; glycolysis; D-glyceraldehyde 3-phosphate and glycerone phosphate from D-glucose: step 2/4. In terms of biological role, catalyzes the reversible isomerization of glucose-6-phosphate to fructose-6-phosphate. The protein is Glucose-6-phosphate isomerase of Dechloromonas aromatica (strain RCB).